Here is a 100-residue protein sequence, read N- to C-terminus: Putative PIN1-like protein (100 aa).

Residues 1-15 (MADEEKLPPGWEKRM) show a composition bias toward basic and acidic residues. Disordered stretches follow at residues 1-52 (MADE…QGEP) and 69-100 (LDLA…REGL). In terms of domain architecture, WW spans 5–38 (EKLPPGWEKRMSRPSGRGYYFNHITNPSQWERPS). Positions 27–44 (HITNPSQWERPSGNSSSG) are enriched in polar residues. Over residues 87 to 100 (QRLHPEDQGRREGL) the composition is skewed to basic and acidic residues.

This chain is Putative PIN1-like protein (PIN1P1), found in Homo sapiens (Human).